Reading from the N-terminus, the 100-residue chain is Urease subunit gamma (100 aa).

It belongs to the urease gamma subunit family. As to quaternary structure, heterotrimer of UreA (gamma), UreB (beta) and UreC (alpha) subunits. Three heterotrimers associate to form the active enzyme.

The protein localises to the cytoplasm. The catalysed reaction is urea + 2 H2O + H(+) = hydrogencarbonate + 2 NH4(+). It participates in nitrogen metabolism; urea degradation; CO(2) and NH(3) from urea (urease route): step 1/1. The sequence is that of Urease subunit gamma from Arthrobacter sp. (strain FB24).